We begin with the raw amino-acid sequence, 202 residues long: Oligoribonuclease (202 aa).

Residues 2-166 enclose the Exonuclease domain; the sequence is LVWIDCEMTG…ADIQESIEEL (165 aa). The active site involves tyrosine 123.

It belongs to the oligoribonuclease family.

It localises to the cytoplasm. In terms of biological role, 3'-to-5' exoribonuclease specific for small oligoribonucleotides. In Cutibacterium acnes (strain DSM 16379 / KPA171202) (Propionibacterium acnes), this protein is Oligoribonuclease.